We begin with the raw amino-acid sequence, 134 residues long: MAGGAGGDGDGRQALGREGEALAAAWLAERGFRILDRNHRTRRGEVDLVCRDGEVLVFVEVRSRTSGAQGGPEETVGPLKGRRVVAAATDWALGHGGLEQAIRFDVVAVTFGDGEPRVEHFPAAFDGDGRPGHW.

The protein belongs to the UPF0102 family.

The chain is UPF0102 protein Adeh_1910 from Anaeromyxobacter dehalogenans (strain 2CP-C).